Consider the following 1445-residue polypeptide: ABC-type transporter FGSG_00046 (1445 aa).

The next 11 helical transmembrane spans lie at 21 to 41 (LFEE…MLLV), 77 to 97 (LILW…AAAL), 119 to 138 (PSSL…VTRV), 150 to 170 (ISIL…FESL), 187 to 207 (EIVG…FILG), 255 to 277 (TLLR…PLLL), 297 to 317 (YGLI…TALA), 368 to 388 (LQFV…IFLL), 392 to 412 (VALG…GTVL), 481 to 501 (VFST…YVLM), and 520 to 540 (SLFS…PAIF). An ABC transmembrane type-1 1 domain is found at 259-541 (GGLCRLFTAL…FLTSVPAIFS (283 aa)). An ABC transporter 1 domain is found at 595–821 (IRDGSVRWKG…DEIEASTYSR (227 aa)). 627–634 (GSVGSGKS) contacts ATP. The disordered stretch occupies residues 803 to 850 (RNTQKDMQDDEIEASTYSREQNGPKKQEEDANHESNQSPETSQEHELA). A compositionally biased stretch (basic and acidic residues) spans 824–835 (NGPKKQEEDANH). Helical transmembrane passes span 868–888 (GMGF…WQNF), 912–932 (IGVY…VTWF), 1004–1024 (IPLT…QLVM), 1026–1046 (SIGT…LAII), 1116–1136 (LTLV…GVTI), and 1147–1167 (IGLA…LLTW). One can recognise an ABC transmembrane type-1 2 domain in the interval 974–1173 (HRAPMSYFES…LLTWWTMMEA (200 aa)). Positions 1210-1441 (IELKELSASY…DVSLFQDLFS (232 aa)) constitute an ABC transporter 2 domain. Residue 1244–1251 (GRTGSGKT) coordinates ATP.

The protein belongs to the ABC transporter superfamily. ABCC family.

It localises to the cell membrane. Functionally, ABC-type transporter; part of the gene cluster that mediates the biosynthesis of gramillins A and B, bicyclic lipopeptides that induce cell death in maize leaves but not in wheat leaves. May be involved in the secretion of gramillins. The polypeptide is ABC-type transporter FGSG_00046 (Gibberella zeae (strain ATCC MYA-4620 / CBS 123657 / FGSC 9075 / NRRL 31084 / PH-1) (Wheat head blight fungus)).